Here is a 350-residue protein sequence, read N- to C-terminus: Induced myeloid leukemia cell differentiation protein Mcl-1 homolog (350 aa).

Lys5 is covalently cross-linked (Glycyl lysine isopeptide (Lys-Gly) (interchain with G-Cter in ubiquitin)). The segment at 23–95 (AGSGGASSSG…GPNVSATPPR (73 aa)) is disordered. A compositionally biased stretch (low complexity) spans 31–41 (SGGRLLASGRE). Gly residues predominate over residues 50–61 (GGEAGAVIGGSA). A PEST-like region spans residues 104-175 (RASPPEEMEG…PAEEEEDELY (72 aa)). Residue Ser121 is modified to Phosphoserine. Lys136 participates in a covalent cross-link: Glycyl lysine isopeptide (Lys-Gly) (interchain with G-Cter in ubiquitin). The disordered stretch occupies residues 150–169 (ASSGPGMDGSLPSTPPPAEE). A Phosphoserine; by GSK3-alpha and GSK3-beta modification is found at Ser159. At Ser162 the chain carries Phosphoserine. Phosphothreonine is present on Thr163. Residues Lys194 and Lys197 each participate in a glycyl lysine isopeptide (Lys-Gly) (interchain with G-Cter in ubiquitin) cross-link. The BH3 motif lies at 209–223 (ALETLQRVGDGVQRN). The BH1 signature appears at 252-272 (HVFSDGVTNWGRIVTLISFGA). The BH2 signature appears at 304–319 (DWLVKQRGWDGFVEFF). A helical transmembrane segment spans residues 327-349 (GIRNVLLAFAGVAGVGAGLAYLI).

It belongs to the Bcl-2 family. As to quaternary structure, interacts with HIF3A (via C-terminus domain). Interacts with BOK, BIK, BAX, BAK1, and TPT1. Interacts with unphosphorylated BAD. Interacts with BMF, BBC3 and PMAIP1. Interacts with BOP. Interacts with BCL2L11; may sequester BCL2L11 to prevent its pro-apoptotic activity. Interacts with GIMAP5 and HSPA8/HSC70; the interaction between HSPA8 and MCL1 is impaired in the absence of GIMAP5. Post-translationally, cleaved by CASP3 during apoptosis, yielding a pro-apoptotic C-terminal fragment. In terms of processing, rapidly degraded in the absence of phosphorylation in the PEST region. Phosphorylated on Ser-159, by GSK3, in response to IL3/interleukin-3 withdrawal. Phosphorylation at Ser-159 induces ubiquitination and proteasomal degradation, abrogating the anti-apoptotic activity. Treatment with taxol or okadaic acid induces phosphorylation on additional sites. Post-translationally, ubiquitinated. Ubiquitination is induced by phosphorylation at Ser-159. Deubiquitinated by USP20; leading to increased stability. Detected in peripheral blood mononuclear cells and bone marrow.

The protein localises to the membrane. The protein resides in the cytoplasm. It localises to the mitochondrion. It is found in the nucleus. Its subcellular location is the nucleoplasm. In terms of biological role, involved in the regulation of apoptosis versus cell survival, and in the maintenance of viability but not of proliferation. Mediates its effects by interactions with a number of other regulators of apoptosis. In Canis lupus familiaris (Dog), this protein is Induced myeloid leukemia cell differentiation protein Mcl-1 homolog (MCL1).